The chain runs to 591 residues: Serine/threonine-protein kinase Nek2 (591 aa).

Residues 4 to 258 form the Protein kinase domain; that stretch reads YEVLEQIGKG…AAQLLKHPQL (255 aa). Residues 10–18 and lysine 33 contribute to the ATP site; that span reads IGKGAFGSA. Aspartate 129 serves as the catalytic Proton acceptor. 3 disordered regions span residues 309–331, 382–408, and 500–534; these read LGNE…SSTR, ARNQ…TTPN, and RTDG…DTSS. Composition is skewed to polar residues over residues 391 to 408 and 504 to 534; these read TSYN…TTPN and DNGS…DTSS.

The protein belongs to the protein kinase superfamily. NEK Ser/Thr protein kinase family. NIMA subfamily. As to expression, expressed in anthers, pistils and leaves.

The enzyme catalyses L-seryl-[protein] + ATP = O-phospho-L-seryl-[protein] + ADP + H(+). The catalysed reaction is L-threonyl-[protein] + ATP = O-phospho-L-threonyl-[protein] + ADP + H(+). Functionally, may be involved in plant development processes. The sequence is that of Serine/threonine-protein kinase Nek2 from Oryza sativa subsp. japonica (Rice).